The chain runs to 156 residues: Transcription antitermination protein NusB (156 aa).

Belongs to the NusB family.

In terms of biological role, involved in transcription antitermination. Required for transcription of ribosomal RNA (rRNA) genes. Binds specifically to the boxA antiterminator sequence of the ribosomal RNA (rrn) operons. In Rickettsia akari (strain Hartford), this protein is Transcription antitermination protein NusB.